The primary structure comprises 171 residues: MTEKNQDAVTEEQGTEVVLQIQRIYVKDVSFEAPNLPHIFQQEWKPKLDFNLSTETTHLAEDLYEVCLNISVETTMEGSEDVAFICEVKQAGIFAISGLEDVQLAHCLTSQCPNMLFPYARELISSLVNRGTFPALNLAPVNFDALFVEYMQRQQAQEESKAEEKEKKEVH.

The protein belongs to the SecB family. Homotetramer, a dimer of dimers. One homotetramer interacts with 1 SecA dimer.

It localises to the cytoplasm. Its function is as follows. One of the proteins required for the normal export of preproteins out of the cell cytoplasm. It is a molecular chaperone that binds to a subset of precursor proteins, maintaining them in a translocation-competent state. It also specifically binds to its receptor SecA. The protein is Protein-export protein SecB of Histophilus somni (strain 129Pt) (Haemophilus somnus).